A 387-amino-acid chain; its full sequence is MNTVVIVDCLRTPMGRSKGGAFRHQRAEDLSAHLMKGILARNPQVNPKEIEDIYWGCVQQTLEQGFNVARNAALLAGLPIEIGAVTVNRLCGSSMQALHDAARAIMVGDAEICLVGGVEHMGHVPMTHGVDFHPGLSKNVAKAAGMMGLTAEMLGKLHGISRQQQDEFAARSHARAHAATLEGRFKNEILPTEGHAADGTLFTLDYDEVIRPETTVAGLAELRPVFDPANGTVTAGTSSALSDGASAMLVMSEQKAKALGLTIRARIKAMAVAGCDPSIMGYGPVPATHKALKRAGLTMQDMDVVELNEAFAAQSLPCAKDLGLLDMMDDKVNLNGGAIALGHPLGCSGTRISTTLINLMEAKDAKYGLATMCIGLGQGIATIFERP.

The active-site Acyl-thioester intermediate is the Cys91. Residues His343 and Cys373 each act as proton acceptor in the active site.

It belongs to the thiolase-like superfamily. Thiolase family. In terms of assembly, heterotetramer of two alpha chains (FadB) and two beta chains (FadA).

The protein resides in the cytoplasm. It carries out the reaction an acyl-CoA + acetyl-CoA = a 3-oxoacyl-CoA + CoA. It participates in lipid metabolism; fatty acid beta-oxidation. In terms of biological role, catalyzes the final step of fatty acid oxidation in which acetyl-CoA is released and the CoA ester of a fatty acid two carbons shorter is formed. This is 3-ketoacyl-CoA thiolase from Vibrio cholerae serotype O1 (strain ATCC 39541 / Classical Ogawa 395 / O395).